Reading from the N-terminus, the 237-residue chain is Lectin (237 aa).

2 residues coordinate Mn(2+): E8 and D10. The Ca(2+) site is built by D10, Y12, N14, and D19. A carbohydrate-binding residues include Y12 and N14. Mn(2+) is bound by residues D19 and H24. Residue G98–Y100 participates in a carbohydrate binding. Position 208 (D208) interacts with Ca(2+). Residues G227 and R228 each coordinate a carbohydrate.

Belongs to the leguminous lectin family. Homotetramer; dimer of dimers. Concanavalin A-like lectins of the Diocleinae subtribe undergo proteolytic processing referred to as circular permutation. The propeptide is split into an N-terminal and a C-terminal part, the gamma and beta chain, respectively. These are then religated in beta-gamma order to form the mature alpha chain. The beta and gamma chains can often be detected in cell extracts. Residues 1-118 of the mature chain, as displayed here, probably constitute the beta chain in the propeptide, residues 119-237 the gamma chain.

In terms of biological role, D-mannose/D-glucose-binding lectin with hemagglutinating activity towards rabbit and human erythrocytes. In rats, induces dose-dependent paw edema. Has low cytotoxicity against Artemisia sp. The sequence is that of Lectin from Macropsychanthus comosus (Sea purse).